A 357-amino-acid polypeptide reads, in one-letter code: Probable leucine aminopeptidase ARB_00576 (357 aa).

The N-terminal stretch at 1–15 (MKVLAALALSALAMA) is a signal peptide. An N-linked (GlcNAc...) asparagine glycan is attached at Asn76. Zn(2+)-binding residues include His167 and Asp185. The disordered stretch occupies residues 169 to 188 (DSINGNNPQGEAPGADDNGS). N-linked (GlcNAc...) asparagine glycosylation occurs at Asn186. Positions 224 and 251 each coordinate Zn(2+). An N-linked (GlcNAc...) asparagine glycan is attached at Asn269. Cysteines 291 and 295 form a disulfide. His324 contacts Zn(2+).

Belongs to the peptidase M28 family. M28E subfamily. Monomer. It depends on Zn(2+) as a cofactor.

Its subcellular location is the secreted. In terms of biological role, probable extracellular aminopeptidase which contributes to pathogenicity. This Arthroderma benhamiae (strain ATCC MYA-4681 / CBS 112371) (Trichophyton mentagrophytes) protein is Probable leucine aminopeptidase ARB_00576.